Reading from the N-terminus, the 511-residue chain is Exodeoxyribonuclease 7 large subunit (511 aa).

It belongs to the XseA family. As to quaternary structure, heterooligomer composed of large and small subunits.

Its subcellular location is the cytoplasm. The catalysed reaction is Exonucleolytic cleavage in either 5'- to 3'- or 3'- to 5'-direction to yield nucleoside 5'-phosphates.. Functionally, bidirectionally degrades single-stranded DNA into large acid-insoluble oligonucleotides, which are then degraded further into small acid-soluble oligonucleotides. The chain is Exodeoxyribonuclease 7 large subunit from Brucella suis (strain ATCC 23445 / NCTC 10510).